The primary structure comprises 158 residues: Phosphopantetheine adenylyltransferase (158 aa).

Thr-10 is a binding site for substrate. ATP-binding positions include Thr-10–Phe-11 and His-18. Positions 42, 74, and 88 each coordinate substrate. ATP-binding positions include Gly-89–Arg-91, Glu-99, and Trp-124–Thr-130.

The protein belongs to the bacterial CoaD family. Homohexamer. Mg(2+) serves as cofactor.

It localises to the cytoplasm. The catalysed reaction is (R)-4'-phosphopantetheine + ATP + H(+) = 3'-dephospho-CoA + diphosphate. It participates in cofactor biosynthesis; coenzyme A biosynthesis; CoA from (R)-pantothenate: step 4/5. In terms of biological role, reversibly transfers an adenylyl group from ATP to 4'-phosphopantetheine, yielding dephospho-CoA (dPCoA) and pyrophosphate. The sequence is that of Phosphopantetheine adenylyltransferase from Actinobacillus pleuropneumoniae serotype 5b (strain L20).